The chain runs to 208 residues: Small ribosomal subunit protein uS4 (208 aa).

In terms of domain architecture, S4 RNA-binding spans 98–161 (QRLDNVVYRM…KNNPQIVRAI (64 aa)).

The protein belongs to the universal ribosomal protein uS4 family. In terms of assembly, part of the 30S ribosomal subunit. Contacts protein S5. The interaction surface between S4 and S5 is involved in control of translational fidelity.

Functionally, one of the primary rRNA binding proteins, it binds directly to 16S rRNA where it nucleates assembly of the body of the 30S subunit. In terms of biological role, with S5 and S12 plays an important role in translational accuracy. This Campylobacter concisus (strain 13826) protein is Small ribosomal subunit protein uS4.